We begin with the raw amino-acid sequence, 261 residues long: MYLRAVHAETHIPLLQQFIRDNPLGILTTAIKSPNYPLLQSSHIPFVLDIPDTPTDKANSDLTPGTLRGHIAKQNPQAKALMEALAQHQAQTQSTTLELPDEVLILFNGPHHHYVTPKFYKDTKPATGKVVPTWNYSAVQAYGKITVYCDSKAEETGAFLSRQVNDLSRHAETAIMGYTGGERPGPWEVSDAPENYIELLKKNIIGVKVRIERLQGKFKMSQEMGAGDREGVIEGFEKLGTEVGMGIAKTVKERGDMKDKK.

It belongs to the PaiB family.

This is an uncharacterized protein from Aspergillus fumigatus (strain ATCC MYA-4609 / CBS 101355 / FGSC A1100 / Af293) (Neosartorya fumigata).